A 605-amino-acid chain; its full sequence is Sorting nexin MVP1 (605 aa).

Disordered regions lie at residues 113 to 147 (PMDFSEEGERSSINFSASTTGRSQTPLFGDDLDDH) and 175 to 213 (EEQEALQQSQLSQSQLSRSTTPPPLNPQALVPESESGVW). Residues 123–138 (SSINFSASTTGRSQTP) show a composition bias toward polar residues. Over residues 180–193 (LQQSQLSQSQLSRS) the composition is skewed to low complexity. The PX domain occupies 226–343 (ADSVTLAIVP…TFVTLRNDIS (118 aa)). 4 residues coordinate a 1,2-diacyl-sn-glycero-3-phospho-(1D-myo-inositol-3-phosphate): Arg264, Ser266, Lys290, and Arg309.

The protein belongs to the sorting nexin family.

It localises to the cytoplasm. It is found in the membrane. Its function is as follows. Required for vacuolar protein sorting. The protein is Sorting nexin MVP1 (MVP1) of Yarrowia lipolytica (strain CLIB 122 / E 150) (Yeast).